The primary structure comprises 390 residues: Na(+)/H(+) antiporter NhaA 1 (390 aa).

Helical transmembrane passes span 14–34 (SGIL…NGVL), 59–79 (TILW…GLEL), 94–114 (VALP…IFYV), 125–145 (GWAI…FLLG), 154–174 (LFLL…IAIF), 179–199 (LSII…ILNY), 205–225 (IYIY…SGIH), 260–280 (PIVA…VVFS), 295–315 (IIFG…FLAI), 328–348 (WLHL…SLFI), and 362–382 (ANKI…YFVL).

The protein belongs to the NhaA Na(+)/H(+) (TC 2.A.33) antiporter family.

The protein resides in the cell inner membrane. The catalysed reaction is Na(+)(in) + 2 H(+)(out) = Na(+)(out) + 2 H(+)(in). Na(+)/H(+) antiporter that extrudes sodium in exchange for external protons. In Campylobacter fetus subsp. fetus (strain 82-40), this protein is Na(+)/H(+) antiporter NhaA 1.